The chain runs to 552 residues: Urocanate hydratase (552 aa).

NAD(+)-binding positions include 49–50, Gln-127, 173–175, Asp-193, 239–240, 260–264, 270–271, and Tyr-319; these read GG, GMG, NA, QTSAH, and YI. Cys-407 is an active-site residue. Gly-489 contacts NAD(+).

The protein belongs to the urocanase family. NAD(+) is required as a cofactor.

Its subcellular location is the cytoplasm. The catalysed reaction is 4-imidazolone-5-propanoate = trans-urocanate + H2O. Its pathway is amino-acid degradation; L-histidine degradation into L-glutamate; N-formimidoyl-L-glutamate from L-histidine: step 2/3. In terms of biological role, catalyzes the conversion of urocanate to 4-imidazolone-5-propionate. In Bacillus cereus (strain AH820), this protein is Urocanate hydratase.